A 322-amino-acid polypeptide reads, in one-letter code: Transaldolase (322 aa).

Lys136 (schiff-base intermediate with substrate) is an active-site residue.

This sequence belongs to the transaldolase family. Type 1 subfamily. As to quaternary structure, homodimer.

It is found in the cytoplasm. The catalysed reaction is D-sedoheptulose 7-phosphate + D-glyceraldehyde 3-phosphate = D-erythrose 4-phosphate + beta-D-fructose 6-phosphate. Its pathway is carbohydrate degradation; pentose phosphate pathway; D-glyceraldehyde 3-phosphate and beta-D-fructose 6-phosphate from D-ribose 5-phosphate and D-xylulose 5-phosphate (non-oxidative stage): step 2/3. Its function is as follows. Transaldolase is important for the balance of metabolites in the pentose-phosphate pathway. The polypeptide is Transaldolase (Xanthomonas campestris pv. campestris (strain B100)).